The following is a 433-amino-acid chain: Eukaryotic peptide chain release factor subunit 1 (433 aa).

Glutamine 182 carries the N5-methylglutamine modification. A Phosphoserine modification is found at serine 425.

The protein belongs to the eukaryotic release factor 1 family. As to quaternary structure, component of the eRF1-eRF3-GTP ternary complex, composed of sup45/eRF1, sup35/eRF3 and GTP.

The protein resides in the cytoplasm. Its function is as follows. Component of the eRF1-eRF3-GTP ternary complex, a ternary complex that mediates translation termination in response to the termination codons. The eRF1-eRF3-GTP complex binds to a stop codon in the ribosomal A-site. Sup45/eRF1 is responsible for stop codon recognition and inducing hydrolysis of peptidyl-tRNA. Following GTP hydrolysis by sup35/eRF3, sup35/eRF3 dissociates, permitting sup45/eRF1 to accommodate fully in the A-site. The protein is Eukaryotic peptide chain release factor subunit 1 (sup45) of Schizosaccharomyces pombe (strain 972 / ATCC 24843) (Fission yeast).